Consider the following 77-residue polypeptide: MAREEPCPNCGKMAEIVSEGDREILRCAACGTERVIVGMEEILPIEKKLVIASLILAIILLGILYYISYQMIAHLYT.

Residues 49-71 (LVIASLILAIILLGILYYISYQM) traverse the membrane as a helical segment.

It localises to the membrane. This is an uncharacterized protein from Archaeoglobus fulgidus (strain ATCC 49558 / DSM 4304 / JCM 9628 / NBRC 100126 / VC-16).